We begin with the raw amino-acid sequence, 201 residues long: Homeobox protein ceh-28 (201 aa).

Positions 72–84 (SYYSSPSQNQRSY) are enriched in polar residues. Positions 72–94 (SYYSSPSQNQRSYQNHRQHSNPD) are disordered. The segment at residues 104–163 (KRKPRVLFTQHQVNELEERFKKQRYVTATEREELAQCLGLTATQVKIWFQNRRYKCKRLA) is a DNA-binding region (homeobox).

Belongs to the NK-2 homeobox family.

The protein resides in the nucleus. Probable transcription factor that regulates neuronal differention, including synapse assembly of the cholinergic motor neuron M4. Activates expression of growth factor, neuropeptide and transcription factor genes, such as TGF-beta dbl-1, FMRFamide-like flp-5 and transcription repressor zag-1, in the M4 neuron. Required for pharynx peristalsis. The polypeptide is Homeobox protein ceh-28 (Caenorhabditis elegans).